The chain runs to 345 residues: Fructose-bisphosphate aldolase (345 aa).

D-glyceraldehyde 3-phosphate is bound at residue Ser-53. Catalysis depends on Asp-95, which acts as the Proton donor. 4 residues coordinate Zn(2+): His-96, Asp-131, Glu-161, and His-212. Gly-213 is a dihydroxyacetone phosphate binding site. His-252 contributes to the Zn(2+) binding site. Dihydroxyacetone phosphate contacts are provided by residues 253-255 and 274-277; these read GGS and NVDT.

It belongs to the class II fructose-bisphosphate aldolase family. The cofactor is Zn(2+).

It carries out the reaction beta-D-fructose 1,6-bisphosphate = D-glyceraldehyde 3-phosphate + dihydroxyacetone phosphate. The protein operates within carbohydrate degradation; glycolysis; D-glyceraldehyde 3-phosphate and glycerone phosphate from D-glucose: step 4/4. Its function is as follows. Catalyzes the aldol condensation of dihydroxyacetone phosphate (DHAP or glycerone-phosphate) with glyceraldehyde 3-phosphate (G3P) to form fructose 1,6-bisphosphate (FBP) in gluconeogenesis and the reverse reaction in glycolysis. The chain is Fructose-bisphosphate aldolase (fba) from Mycobacterium leprae (strain TN).